Here is a 146-residue protein sequence, read N- to C-terminus: NADPH-dependent 7-cyano-7-deazaguanine reductase (146 aa).

The active-site Thioimide intermediate is the C48. Residue D55 is the Proton donor of the active site. Residues 70 to 72 (VES) and 89 to 90 (HE) each bind substrate.

The protein belongs to the GTP cyclohydrolase I family. QueF type 1 subfamily.

The protein resides in the cytoplasm. It catalyses the reaction 7-aminomethyl-7-carbaguanine + 2 NADP(+) = 7-cyano-7-deazaguanine + 2 NADPH + 3 H(+). It functions in the pathway tRNA modification; tRNA-queuosine biosynthesis. Functionally, catalyzes the NADPH-dependent reduction of 7-cyano-7-deazaguanine (preQ0) to 7-aminomethyl-7-deazaguanine (preQ1). The sequence is that of NADPH-dependent 7-cyano-7-deazaguanine reductase from Helicobacter pylori (strain Shi470).